A 352-amino-acid chain; its full sequence is Uroporphyrinogen decarboxylase (352 aa).

Substrate is bound by residues Arg-26 to Arg-30, Asp-76, Tyr-153, Ser-208, and His-323.

It belongs to the uroporphyrinogen decarboxylase family. As to quaternary structure, homodimer.

It is found in the cytoplasm. The catalysed reaction is uroporphyrinogen III + 4 H(+) = coproporphyrinogen III + 4 CO2. It participates in porphyrin-containing compound metabolism; protoporphyrin-IX biosynthesis; coproporphyrinogen-III from 5-aminolevulinate: step 4/4. In terms of biological role, catalyzes the decarboxylation of four acetate groups of uroporphyrinogen-III to yield coproporphyrinogen-III. The polypeptide is Uroporphyrinogen decarboxylase (Prochlorococcus marinus (strain NATL2A)).